The chain runs to 464 residues: tRNA-2-methylthio-N(6)-dimethylallyladenosine synthase (464 aa).

Positions 4–119 constitute an MTTase N-terminal domain; sequence RTFHIMTFGC…APQAIERLVQ (116 aa). Residues Cys-13, Cys-48, Cys-82, Cys-158, Cys-162, and Cys-165 each contribute to the [4Fe-4S] cluster site. In terms of domain architecture, Radical SAM core spans 144–375; that stretch reads GEVPVSAYVN…QEVQNEYSEA (232 aa). Residues 378 to 461 enclose the TRAM domain; it reads QAMVGKTVMV…KHSLTGEPAG (84 aa). The interval 393-420 is disordered; that stretch reads SPKSAAGSGTDAQNAAEESGRTASSWQG.

Belongs to the methylthiotransferase family. MiaB subfamily. Monomer. It depends on [4Fe-4S] cluster as a cofactor.

Its subcellular location is the cytoplasm. It carries out the reaction N(6)-dimethylallyladenosine(37) in tRNA + (sulfur carrier)-SH + AH2 + 2 S-adenosyl-L-methionine = 2-methylsulfanyl-N(6)-dimethylallyladenosine(37) in tRNA + (sulfur carrier)-H + 5'-deoxyadenosine + L-methionine + A + S-adenosyl-L-homocysteine + 2 H(+). Catalyzes the methylthiolation of N6-(dimethylallyl)adenosine (i(6)A), leading to the formation of 2-methylthio-N6-(dimethylallyl)adenosine (ms(2)i(6)A) at position 37 in tRNAs that read codons beginning with uridine. The protein is tRNA-2-methylthio-N(6)-dimethylallyladenosine synthase of Oleidesulfovibrio alaskensis (strain ATCC BAA-1058 / DSM 17464 / G20) (Desulfovibrio alaskensis).